The following is a 252-amino-acid chain: Small ribosomal subunit protein uS3 (252 aa).

The region spanning 39–109 (IRNYVNTRLK…EVKIDVVEVV (71 aa)) is the KH type-2 domain. Basic and acidic residues predominate over residues 222-240 (MKKIRDRRNDQRSRGGRDS). Positions 222 to 252 (MKKIRDRRNDQRSRGGRDSRNKRRRRPKNTA) are disordered. The segment covering 241–252 (RNKRRRRPKNTA) has biased composition (basic residues).

It belongs to the universal ribosomal protein uS3 family. Part of the 30S ribosomal subunit. Forms a tight complex with proteins S10 and S14.

In terms of biological role, binds the lower part of the 30S subunit head. Binds mRNA in the 70S ribosome, positioning it for translation. This Chlorobium phaeobacteroides (strain BS1) protein is Small ribosomal subunit protein uS3.